Here is a 201-residue protein sequence, read N- to C-terminus: UPF0056 membrane protein PH0760 (201 aa).

Helical transmembrane passes span 8–28, 49–69, 73–93, 111–131, 140–160, and 181–201; these read FMILYTGMFAITNPIGAVPVF, ITVFITLTVFALVGQWIFKFF, IDAFAIAGGILLFRMGMEMLS, VAVIPLAIPLISGPGAITTVM, GIVILTIIAIGLTTYGILYSG, and LILTSMAMQMIINGIKGAFGI.

It belongs to the UPF0056 (MarC) family.

It localises to the cell membrane. The chain is UPF0056 membrane protein PH0760 from Pyrococcus horikoshii (strain ATCC 700860 / DSM 12428 / JCM 9974 / NBRC 100139 / OT-3).